Here is a 264-residue protein sequence, read N- to C-terminus: Thymidylate synthase (264 aa).

Arginine 21 contributes to the dUMP binding site. Histidine 51 contributes to the (6R)-5,10-methylene-5,6,7,8-tetrahydrofolate binding site. Residue cysteine 146 is the Nucleophile of the active site. Residues 166–169 (RSAD), asparagine 177, and 207–209 (HIY) each bind dUMP. Position 169 (aspartate 169) interacts with (6R)-5,10-methylene-5,6,7,8-tetrahydrofolate. A (6R)-5,10-methylene-5,6,7,8-tetrahydrofolate-binding site is contributed by alanine 263.

The protein belongs to the thymidylate synthase family. Bacterial-type ThyA subfamily. In terms of assembly, homodimer.

It localises to the cytoplasm. It carries out the reaction dUMP + (6R)-5,10-methylene-5,6,7,8-tetrahydrofolate = 7,8-dihydrofolate + dTMP. It participates in pyrimidine metabolism; dTTP biosynthesis. In terms of biological role, catalyzes the reductive methylation of 2'-deoxyuridine-5'-monophosphate (dUMP) to 2'-deoxythymidine-5'-monophosphate (dTMP) while utilizing 5,10-methylenetetrahydrofolate (mTHF) as the methyl donor and reductant in the reaction, yielding dihydrofolate (DHF) as a by-product. This enzymatic reaction provides an intracellular de novo source of dTMP, an essential precursor for DNA biosynthesis. This chain is Thymidylate synthase, found in Brucella canis (strain ATCC 23365 / NCTC 10854 / RM-666).